The primary structure comprises 80 residues: Protein Vpu (80 aa).

Residues Met1–Leu7 are Extracellular-facing. A helical transmembrane segment spans residues Ala8–Ile28. Residues Glu29 to Leu80 are Cytoplasmic-facing. Residues Arg49 to Leu80 are disordered. Residues Ser53 and Ser57 each carry the phosphoserine; by host CK2 modification. Acidic residues predominate over residues Ser53–Ala65.

It belongs to the HIV-1 VPU protein family. As to quaternary structure, homopentamer. Interacts with host CD4 and BRTC; these interactions induce proteasomal degradation of CD4. Interacts with host BST2; this interaction leads to the degradation of host BST2. Interacts with host FBXW11. Interacts with host AP1M1; this interaction plays a role in the mistrafficking and subsequent degradation of host BST2. Interacts with host RANBP2; this interaction allows Vpu to down-regulate host BLM sumoylation. Post-translationally, phosphorylated by host CK2. This phosphorylation is necessary for interaction with human BTRC and degradation of CD4.

It is found in the host membrane. Its activity is regulated as follows. Ion channel activity is inhibited by hexamethylene amiloride in vitro. Its function is as follows. Enhances virion budding by targeting host CD4 and Tetherin/BST2 to proteasome degradation. Degradation of CD4 prevents any unwanted premature interactions between viral Env and its host receptor CD4 in the endoplasmic reticulum. Degradation of antiretroviral protein Tetherin/BST2 is important for virion budding, as BST2 tethers new viral particles to the host cell membrane. Mechanistically, Vpu bridges either CD4 or BST2 to BTRC, a substrate recognition subunit of the Skp1/Cullin/F-box protein E3 ubiquitin ligase, induces their ubiquitination and subsequent proteasomal degradation. The alteration of the E3 ligase specificity by Vpu seems to promote the degradation of host IKBKB, leading to NF-kappa-B down-regulation and subsequent apoptosis. Acts as a viroporin that forms an oligomeric ion channel in membranes. Modulates the host DNA repair mechanisms to promote degradation of nuclear viral cDNA in cells that are already productively infected in order to suppress immune sensing and proviral hyper-integration (superinfection). Manipulates PML-NBs and modulates SUMOylation of host BLM protein thereby enhancing its DNA-end processing activity toward viral unintegrated linear DNA. Also inhibits RAD52-mediated homologous repair of viral cDNA, preventing the generation of dead-end circular forms of single copies of the long terminal repeat and permitting sustained nucleolytic attack. In Human immunodeficiency virus type 1 group M subtype B (strain 89.6) (HIV-1), this protein is Protein Vpu.